The following is a 318-amino-acid chain: Thymidylate synthase (318 aa).

Residues R25 and 180–181 (RR) contribute to the dUMP site. Catalysis depends on C200, which acts as the Nucleophile. DUMP is bound by residues 220-223 (RSGD), N231, and 261-263 (HIY). D223 is a (6R)-5,10-methylene-5,6,7,8-tetrahydrofolate binding site. Residue A317 coordinates (6R)-5,10-methylene-5,6,7,8-tetrahydrofolate.

It belongs to the thymidylate synthase family. Bacterial-type ThyA subfamily. In terms of assembly, homodimer.

It localises to the cytoplasm. The enzyme catalyses dUMP + (6R)-5,10-methylene-5,6,7,8-tetrahydrofolate = 7,8-dihydrofolate + dTMP. The protein operates within pyrimidine metabolism; dTTP biosynthesis. In terms of biological role, catalyzes the reductive methylation of 2'-deoxyuridine-5'-monophosphate (dUMP) to 2'-deoxythymidine-5'-monophosphate (dTMP) while utilizing 5,10-methylenetetrahydrofolate (mTHF) as the methyl donor and reductant in the reaction, yielding dihydrofolate (DHF) as a by-product. This enzymatic reaction provides an intracellular de novo source of dTMP, an essential precursor for DNA biosynthesis. The sequence is that of Thymidylate synthase from Bacillus cereus (strain ATCC 10987 / NRS 248).